Here is a 118-residue protein sequence, read N- to C-terminus: UPF0344 protein Aflv_2205 (118 aa).

Transmembrane regions (helical) follow at residues 4–24 (AHITTWVVALILFVVAIALQA), 32–52 (MLHMLLRLFYILIIATGAWIL), 60–80 (FLYIVKVIVGLWVIGTMEMIL), and 96–116 (FIVAFVVVLYLGFKLPFGFSF).

Belongs to the UPF0344 family.

The protein localises to the cell membrane. In Anoxybacillus flavithermus (strain DSM 21510 / WK1), this protein is UPF0344 protein Aflv_2205.